A 211-amino-acid chain; its full sequence is Large ribosomal subunit protein uL3 (211 aa).

This sequence belongs to the universal ribosomal protein uL3 family. As to quaternary structure, part of the 50S ribosomal subunit. Forms a cluster with proteins L14 and L19.

In terms of biological role, one of the primary rRNA binding proteins, it binds directly near the 3'-end of the 23S rRNA, where it nucleates assembly of the 50S subunit. The polypeptide is Large ribosomal subunit protein uL3 (Halothermothrix orenii (strain H 168 / OCM 544 / DSM 9562)).